The chain runs to 397 residues: Acetate kinase (397 aa).

Asn7 is a binding site for Mg(2+). Residue Lys14 coordinates ATP. Substrate is bound at residue Arg91. Residue Asp148 is the Proton donor/acceptor of the active site. Residues His208 to Gly212, Asp283 to Arg285, and Gly331 to Asn335 contribute to the ATP site. Glu384 serves as a coordination point for Mg(2+).

This sequence belongs to the acetokinase family. As to quaternary structure, homodimer. Requires Mg(2+) as cofactor. The cofactor is Mn(2+).

It localises to the cytoplasm. The enzyme catalyses acetate + ATP = acetyl phosphate + ADP. It participates in metabolic intermediate biosynthesis; acetyl-CoA biosynthesis; acetyl-CoA from acetate: step 1/2. In terms of biological role, catalyzes the formation of acetyl phosphate from acetate and ATP. Can also catalyze the reverse reaction. The chain is Acetate kinase from Syntrophomonas wolfei subsp. wolfei (strain DSM 2245B / Goettingen).